We begin with the raw amino-acid sequence, 122 residues long: Large ribosomal subunit protein bL19 (122 aa).

Belongs to the bacterial ribosomal protein bL19 family.

In terms of biological role, this protein is located at the 30S-50S ribosomal subunit interface and may play a role in the structure and function of the aminoacyl-tRNA binding site. In Novosphingobium aromaticivorans (strain ATCC 700278 / DSM 12444 / CCUG 56034 / CIP 105152 / NBRC 16084 / F199), this protein is Large ribosomal subunit protein bL19.